We begin with the raw amino-acid sequence, 751 residues long: Protein WEAK CHLOROPLAST MOVEMENT UNDER BLUE LIGHT-like 3 (751 aa).

Position 113 is a phosphoserine (Ser113). Coiled coils occupy residues 165-558 (ERRK…ALQE) and 588-647 (QALE…KARD). Composition is skewed to basic and acidic residues over residues 455 to 467 (RERQ…KQKE) and 625 to 689 (NREM…RNKE). Disordered stretches follow at residues 455 to 479 (RERQ…DKDA) and 625 to 751 (NREM…HSHK). Over residues 704–723 (GSSSNNTGGSTTTNNNNLTP) the composition is skewed to low complexity.

This sequence belongs to the WEB family.

This Arabidopsis thaliana (Mouse-ear cress) protein is Protein WEAK CHLOROPLAST MOVEMENT UNDER BLUE LIGHT-like 3 (WEL3).